The chain runs to 182 residues: Large ribosomal subunit protein uL16 (182 aa).

Residues 140-182 form a disordered region; it reads EKPTQVGKAPPKSSFLPSDETETAAAQAGTEASSASSVTPLES. Positions 162-176 are enriched in low complexity; the sequence is TAAAQAGTEASSASS.

Belongs to the universal ribosomal protein uL16 family. As to quaternary structure, part of the 50S ribosomal subunit.

Binds 23S rRNA and is also seen to make contacts with the A and possibly P site tRNAs. In Prochlorococcus marinus (strain SARG / CCMP1375 / SS120), this protein is Large ribosomal subunit protein uL16.